A 2055-amino-acid chain; its full sequence is Citron Rho-interacting kinase (2055 aa).

Residue methionine 1 is modified to N-acetylmethionine. One can recognise a Protein kinase domain in the interval 97-359 (FEVRSLVGCG…FEGLCCHPFF (263 aa)). ATP contacts are provided by residues 103–111 (VGCGHFAEV) and lysine 126. Residue aspartate 221 is the Proton acceptor of the active site. In terms of domain architecture, AGC-kinase C-terminal spans 360–430 (ARTDWNNIRN…SKALGYLGRS (71 aa)). Serine 432, serine 439, serine 479, and serine 581 each carry phosphoserine. 3 coiled-coil regions span residues 441 to 1086 (AKVS…QWEA), 1091 to 1247 (LGDE…VLYS), and 1275 to 1325 (AKKK…RKAT). Positions 1132-1328 (LAVKEHKAEI…AAHRKATDHP (197 aa)) are interaction with Rho/Rac. The residue at position 1237 (tyrosine 1237) is a Phosphotyrosine. Residues 1316-1329 (REEAAHRKATDHPH) show a composition bias toward basic and acidic residues. Disordered regions lie at residues 1316–1336 (REEAAHRKATDHPHPSTPATA) and 1348–1377 (SPEHQPSAMSLLAPPSSRRKESSTPEEFSR). The span at 1353 to 1363 (PSAMSLLAPPS) shows a compositional bias: low complexity. The span at 1365–1377 (RRKESSTPEEFSR) shows a compositional bias: basic and acidic residues. The Phorbol-ester/DAG-type zinc-finger motif lies at 1388–1437 (PHRFNVGLNMRATKCAVCLDTVHFGRQASKCLECQVMCHPKCSTCLPATC). The 121-residue stretch at 1469 to 1589 (SLHLEGWMKV…WVTALESVVA (121 aa)) folds into the PH domain. The region spanning 1617–1907 (RLDMNCTLPF…RYLGPAISSG (291 aa)) is the CNH domain. An N6-acetyllysine modification is found at lysine 1747. The disordered stretch occupies residues 1932–2040 (SGTEQHRVPS…RGRLPAGAVR (109 aa)). Residues 1939–1948 (VPSTSRSSPN) show a composition bias toward polar residues. Phosphoserine is present on serine 1966. Over residues 1974–2031 (SHPREPSTPHRYRDREGRTELRRDKSPGRPLEREKSPGRMLSTRRERSPGRLFEDSSR) the composition is skewed to basic and acidic residues. The SH3-binding motif lies at 1979-1984 (PSTPHR). A Phosphoserine modification is found at serine 2021. Phosphothreonine is present on threonine 2041.

The protein belongs to the protein kinase superfamily. AGC Ser/Thr protein kinase family. In terms of assembly, interacts with TTC3. Homodimer. Directly interacts with KIF14 depending on the activation state (stronger interaction with the kinase-dead form). As to expression, a major signal was observed in testis and brain, but it was also detected in thymus, spleen, kidney, heart and lung.

Its subcellular location is the cytoplasm. The enzyme catalyses L-seryl-[protein] + ATP = O-phospho-L-seryl-[protein] + ADP + H(+). It catalyses the reaction L-threonyl-[protein] + ATP = O-phospho-L-threonyl-[protein] + ADP + H(+). Its function is as follows. Plays a role in cytokinesis. Required for KIF14 localization to the central spindle and midbody. Probable RHO/RAC effector that binds to the GTP-bound forms of RHO and RAC1. It probably binds p21 with a tighter specificity in vivo. Displays serine/threonine protein kinase activity. Plays an important role in the regulation of cytokinesis and the development of the central nervous system. Phosphorylates MYL9/MLC2. This is Citron Rho-interacting kinase (Cit) from Mus musculus (Mouse).